Consider the following 393-residue polypeptide: Branched-chain-amino-acid aminotransferase, mitochondrial (393 aa).

The N-terminal 27 residues, 1–27, are a transit peptide targeting the mitochondrion; sequence MATAALRQIWIPRFLPVPWFLCGSRRY. Position 169 (Tyr169) interacts with substrate. Lys230 bears the N6-(pyridoxal phosphate)lysine mark. Residue Lys322 is modified to N6-acetyllysine.

The protein belongs to the class-IV pyridoxal-phosphate-dependent aminotransferase family. As to quaternary structure, homodimer. Pyridoxal 5'-phosphate is required as a cofactor.

Its subcellular location is the mitochondrion. It catalyses the reaction L-leucine + 2-oxoglutarate = 4-methyl-2-oxopentanoate + L-glutamate. The enzyme catalyses L-isoleucine + 2-oxoglutarate = (S)-3-methyl-2-oxopentanoate + L-glutamate. It carries out the reaction L-valine + 2-oxoglutarate = 3-methyl-2-oxobutanoate + L-glutamate. Its function is as follows. Catalyzes the first reaction in the catabolism of the essential branched chain amino acids leucine, isoleucine, and valine. May also function as a transporter of branched chain alpha-keto acids. The polypeptide is Branched-chain-amino-acid aminotransferase, mitochondrial (BCAT2) (Bos taurus (Bovine)).